A 364-amino-acid chain; its full sequence is Salivary endonuclease (364 aa).

The N-terminal stretch at 1–24 (MSSFFLSISPLVLALFHVVVQVCS) is a signal peptide. N-linked (GlcNAc...) asparagine glycosylation occurs at N285.

Belongs to the DNA/RNA non-specific endonuclease family. The cofactor is Mg(2+). As to expression, saliva (at protein level). Female salivary gland.

The protein localises to the secreted. In terms of biological role, hydrolyzes double-stranded DNA with no sequence specificity. Does not cleave ssDNA and RNA. May facilitate blood meal intake by lowering the local viscosity created by the release of host DNA. The protein is Salivary endonuclease of Culex quinquefasciatus (Southern house mosquito).